The following is a 493-amino-acid chain: Cobyric acid synthase (493 aa).

The GATase cobBQ-type domain maps to P252–L440. The active-site Nucleophile is the C333. Residue H432 is part of the active site.

Belongs to the CobB/CobQ family. CobQ subfamily.

Its pathway is cofactor biosynthesis; adenosylcobalamin biosynthesis. In terms of biological role, catalyzes amidations at positions B, D, E, and G on adenosylcobyrinic A,C-diamide. NH(2) groups are provided by glutamine, and one molecule of ATP is hydrogenolyzed for each amidation. In Thermodesulfovibrio yellowstonii (strain ATCC 51303 / DSM 11347 / YP87), this protein is Cobyric acid synthase.